The sequence spans 543 residues: Ribonuclease Y (543 aa).

A helical transmembrane segment spans residues 4–24 (IIMIPVATAIVSLLVGTVIGY). The 64-residue stretch at 233–296 (TVSVVDLPNE…EIAKRAMERL (64 aa)) folds into the KH domain. The region spanning 359–452 (VLSHSIEVGK…VVAADTISSA (94 aa)) is the HD domain.

The protein belongs to the RNase Y family.

It localises to the cell membrane. Functionally, endoribonuclease that initiates mRNA decay. This is Ribonuclease Y from Lactobacillus helveticus (strain DPC 4571).